A 126-amino-acid chain; its full sequence is Fluoride-specific ion channel FluC (126 aa).

The next 4 membrane-spanning stretches (helical) occupy residues Pro4–Leu24, Ile33–Ala53, Phe67–Val87, and Met97–Leu117. Residues Gly74 and Thr77 each contribute to the Na(+) site.

The protein belongs to the fluoride channel Fluc/FEX (TC 1.A.43) family.

It is found in the cell inner membrane. It catalyses the reaction fluoride(in) = fluoride(out). Na(+) is not transported, but it plays an essential structural role and its presence is essential for fluoride channel function. Fluoride-specific ion channel. Important for reducing fluoride concentration in the cell, thus reducing its toxicity. This Acinetobacter baumannii (strain SDF) protein is Fluoride-specific ion channel FluC.